A 345-amino-acid polypeptide reads, in one-letter code: MTQLTIITPDDWHLHFRDGDMLQETVPATARLFNRAIVMPNLLPPVTDAKLASAYRERILAARPAGSTFEPLMTIFLTNNTTEQDIIDAKAAGVVAAKLYPAGATTNSDAAVKALDALFPIFEAMEKHGLLLLVHGEVTESHIDIFDREALFIERYLARIVNAFPGLKVVFEHITTKDAADFVMSAADNVAATITPQHLLLNRNDLLVGGVRPHNFCLPVLKRSTHQEALRAVVATGSSKFFLGTDSAPHEKHRKESACGCAGCYSAWSALELYAQVFDDLGALDKLEGFASIHGPDFYGLPRNTGSVTLVKETWTVPSEIILPNGNPIVPFFAGEEVSWKVKTA.

Residues H13 and H15 each contribute to the Zn(2+) site. Substrate is bound by residues 15–17 (HFR) and N41. Zn(2+) contacts are provided by K98, H135, and H173. K98 is modified (N6-carboxylysine). Residue H135 participates in substrate binding. Position 218 (L218) interacts with substrate. D246 serves as a coordination point for Zn(2+). D246 is a catalytic residue. Substrate-binding residues include H250 and A262.

This sequence belongs to the metallo-dependent hydrolases superfamily. DHOase family. Class II DHOase subfamily. Homodimer. The cofactor is Zn(2+).

It carries out the reaction (S)-dihydroorotate + H2O = N-carbamoyl-L-aspartate + H(+). Its pathway is pyrimidine metabolism; UMP biosynthesis via de novo pathway; (S)-dihydroorotate from bicarbonate: step 3/3. In terms of biological role, catalyzes the reversible cyclization of carbamoyl aspartate to dihydroorotate. This Shewanella piezotolerans (strain WP3 / JCM 13877) protein is Dihydroorotase.